Reading from the N-terminus, the 156-residue chain is tRNA (cytidine(34)-2'-O)-methyltransferase (156 aa).

S-adenosyl-L-methionine is bound by residues Gly102, Leu124, and Ser132.

This sequence belongs to the class IV-like SAM-binding methyltransferase superfamily. RNA methyltransferase TrmH family. TrmL subfamily. In terms of assembly, homodimer.

It localises to the cytoplasm. The enzyme catalyses cytidine(34) in tRNA + S-adenosyl-L-methionine = 2'-O-methylcytidine(34) in tRNA + S-adenosyl-L-homocysteine + H(+). The catalysed reaction is 5-carboxymethylaminomethyluridine(34) in tRNA(Leu) + S-adenosyl-L-methionine = 5-carboxymethylaminomethyl-2'-O-methyluridine(34) in tRNA(Leu) + S-adenosyl-L-homocysteine + H(+). Its function is as follows. Methylates the ribose at the nucleotide 34 wobble position in the two leucyl isoacceptors tRNA(Leu)(CmAA) and tRNA(Leu)(cmnm5UmAA). Catalyzes the methyl transfer from S-adenosyl-L-methionine to the 2'-OH of the wobble nucleotide. The sequence is that of tRNA (cytidine(34)-2'-O)-methyltransferase from Burkholderia cenocepacia (strain HI2424).